Here is a 140-residue protein sequence, read N- to C-terminus: Ribosome-binding factor A (140 aa).

Positions 116 to 140 (RERQERGEIPPGSDDAQNCHDDEPS) are disordered.

This sequence belongs to the RbfA family. As to quaternary structure, monomer. Binds 30S ribosomal subunits, but not 50S ribosomal subunits or 70S ribosomes.

It is found in the cytoplasm. Its function is as follows. One of several proteins that assist in the late maturation steps of the functional core of the 30S ribosomal subunit. Associates with free 30S ribosomal subunits (but not with 30S subunits that are part of 70S ribosomes or polysomes). Required for efficient processing of 16S rRNA. May interact with the 5'-terminal helix region of 16S rRNA. In Synechococcus sp. (strain WH7803), this protein is Ribosome-binding factor A.